The sequence spans 97 residues: Co-chaperonin GroES (97 aa).

Belongs to the GroES chaperonin family. In terms of assembly, heptamer of 7 subunits arranged in a ring. Interacts with the chaperonin GroEL.

It is found in the cytoplasm. Functionally, together with the chaperonin GroEL, plays an essential role in assisting protein folding. The GroEL-GroES system forms a nano-cage that allows encapsulation of the non-native substrate proteins and provides a physical environment optimized to promote and accelerate protein folding. GroES binds to the apical surface of the GroEL ring, thereby capping the opening of the GroEL channel. The sequence is that of Co-chaperonin GroES from Buchnera aphidicola subsp. Pterocomma populeum.